The sequence spans 113 residues: U11-theraphotoxin-Hhn1d (113 aa).

The signal sequence occupies residues 1-21; sequence MNTVRVTFLLVFVVAVSLGQA. The propeptide occupies 22–74; it reads DKDENRMEMKDKTEQGKSYLHFAENLLLQKLEDVEAKLLEKDSEKSINSRQKR. Disulfide bonds link C75–C90, C82–C95, and C89–C110.

It belongs to the neurotoxin 14 (magi-1) family. 01 (HNTX-16) subfamily. As to expression, expressed by the venom gland.

The protein localises to the secreted. In terms of biological role, probable ion channel inhibitor. In Cyriopagopus hainanus (Chinese bird spider), this protein is U11-theraphotoxin-Hhn1d.